Here is a 213-residue protein sequence, read N- to C-terminus: Large ribosomal subunit protein uL1 (213 aa).

This sequence belongs to the universal ribosomal protein uL1 family. In terms of assembly, part of the 50S ribosomal subunit.

Binds directly to 23S rRNA. Probably involved in E site tRNA release. Its function is as follows. Protein L1 is also a translational repressor protein, it controls the translation of its operon by binding to its mRNA. The polypeptide is Large ribosomal subunit protein uL1 (Methanosarcina acetivorans (strain ATCC 35395 / DSM 2834 / JCM 12185 / C2A)).